A 229-amino-acid polypeptide reads, in one-letter code: Cytochrome c oxidase subunit 2 (229 aa).

Residues 1 to 26 (MATWMNINLQDANSSTMEQLTMFHDH) are Mitochondrial intermembrane-facing. Residues 27–48 (TLMILTMITSIVTFIMVSMTTN) traverse the membrane as a helical segment. The Mitochondrial matrix segment spans residues 49 to 62 (TLINRYLLEGQTIE). Residues 63 to 82 (FIWTTIPAITLIFIALPSLH) traverse the membrane as a helical segment. Residues 83 to 229 (LLYLIDEINN…LKWINKSLSS (147 aa)) are Mitochondrial intermembrane-facing. The Cu cation site is built by His161, Cys196, Glu198, Cys200, His204, and Met207. Glu198 contacts Mg(2+).

The protein belongs to the cytochrome c oxidase subunit 2 family. As to quaternary structure, component of the cytochrome c oxidase (complex IV, CIV), a multisubunit enzyme composed of a catalytic core of 3 subunits and several supernumerary subunits. The complex exists as a monomer or a dimer and forms supercomplexes (SCs) in the inner mitochondrial membrane with ubiquinol-cytochrome c oxidoreductase (cytochrome b-c1 complex, complex III, CIII). The cofactor is Cu cation.

Its subcellular location is the mitochondrion inner membrane. It carries out the reaction 4 Fe(II)-[cytochrome c] + O2 + 8 H(+)(in) = 4 Fe(III)-[cytochrome c] + 2 H2O + 4 H(+)(out). Functionally, component of the cytochrome c oxidase, the last enzyme in the mitochondrial electron transport chain which drives oxidative phosphorylation. The respiratory chain contains 3 multisubunit complexes succinate dehydrogenase (complex II, CII), ubiquinol-cytochrome c oxidoreductase (cytochrome b-c1 complex, complex III, CIII) and cytochrome c oxidase (complex IV, CIV), that cooperate to transfer electrons derived from NADH and succinate to molecular oxygen, creating an electrochemical gradient over the inner membrane that drives transmembrane transport and the ATP synthase. Cytochrome c oxidase is the component of the respiratory chain that catalyzes the reduction of oxygen to water. Electrons originating from reduced cytochrome c in the intermembrane space (IMS) are transferred via the dinuclear copper A center (CU(A)) of subunit 2 and heme A of subunit 1 to the active site in subunit 1, a binuclear center (BNC) formed by heme A3 and copper B (CU(B)). The BNC reduces molecular oxygen to 2 water molecules using 4 electrons from cytochrome c in the IMS and 4 protons from the mitochondrial matrix. This chain is Cytochrome c oxidase subunit 2 (COII), found in Oncopeltus fasciatus (Large milkweed bug).